Reading from the N-terminus, the 396-residue chain is Putative nickel insertion protein (396 aa).

The segment at 333–355 (RSKLARESQTVETPDGPAKGKTV) is disordered.

Belongs to the LarC family.

The sequence is that of Putative nickel insertion protein from Rhodopirellula baltica (strain DSM 10527 / NCIMB 13988 / SH1).